A 270-amino-acid chain; its full sequence is Tryptophan synthase alpha chain (270 aa).

Active-site proton acceptor residues include glutamate 57 and aspartate 68.

The protein belongs to the TrpA family. In terms of assembly, tetramer of two alpha and two beta chains.

The enzyme catalyses (1S,2R)-1-C-(indol-3-yl)glycerol 3-phosphate + L-serine = D-glyceraldehyde 3-phosphate + L-tryptophan + H2O. It participates in amino-acid biosynthesis; L-tryptophan biosynthesis; L-tryptophan from chorismate: step 5/5. The alpha subunit is responsible for the aldol cleavage of indoleglycerol phosphate to indole and glyceraldehyde 3-phosphate. The chain is Tryptophan synthase alpha chain from Mycobacterium leprae (strain Br4923).